A 430-amino-acid polypeptide reads, in one-letter code: MPSLWDYLNKDKKPVIKKVEPPKKKEIKRDIPLFIKYRPKTLDEVENQEQAKQILRDYVINYKKKYKGKALLLYGPPGTGKTSSVYALANELGYEVLEVNASDERDAIHIHHIVGEASKGKPLFHKGRIILVDEVDGLSGKEDRGGVGALVNIIKQSSWPIICTANDPWDQKLKKLREISIMVEFKRLSPKHVYNVLKKIVTNEKIKISDKILWDIAYKSGGDLRAAINDLETIIKSGIIDENFVKALGNREQEIDIFKALGIMFKTENLATAVSAFNNVDLEFDEIFPWLEENIPVEYKRLDDIYRAYYWLGKADIFRKRIIKTQHWRLLVYAQIDAYGGIALAKNKKYPGFTRYQPPKRLKLLAQMKEKLEKLREHVSKLREKLHMSKRDIIKYYVSFALKLKNLNKTVADKFLKAIGLSLKEIEEIR.

75–82 (GPPGTGKT) is a binding site for ATP.

The protein belongs to the activator 1 small subunits family. RfcL subfamily. In terms of assembly, heteromultimer composed of small subunits (RfcS) and large subunits (RfcL).

In terms of biological role, part of the RFC clamp loader complex which loads the PCNA sliding clamp onto DNA. The protein is Replication factor C large subunit of Nanoarchaeum equitans (strain Kin4-M).